The following is a 105-amino-acid chain: Large ribosomal subunit protein uL24 (105 aa).

Belongs to the universal ribosomal protein uL24 family. As to quaternary structure, part of the 50S ribosomal subunit.

Its function is as follows. One of two assembly initiator proteins, it binds directly to the 5'-end of the 23S rRNA, where it nucleates assembly of the 50S subunit. Functionally, one of the proteins that surrounds the polypeptide exit tunnel on the outside of the subunit. The polypeptide is Large ribosomal subunit protein uL24 (Xylella fastidiosa (strain 9a5c)).